A 1453-amino-acid polypeptide reads, in one-letter code: Scavenger receptor cysteine-rich type 1 protein M160 (1453 aa).

An N-terminal signal peptide occupies residues 1 to 40; it reads MMLPQNSWHIDFGRCCCHQNLFSAVVTCILLLNSCFLISS. The Extracellular portion of the chain corresponds to 41 to 1359; it reads FNGTDLELRL…LKSLNASSGH (1319 aa). N-linked (GlcNAc...) asparagine glycans are attached at residues N42, N78, N120, and N161. 9 SRCR domains span residues 48 to 148, 155 to 255, 262 to 362, 369 to 469, 476 to 576, 583 to 683, 690 to 790, 795 to 895, and 900 to 1000; these read LRLV…VNCY, LRLV…LTCY, LRLV…VICS, LRLA…VICS, LRLV…VTCS, LRLV…LICS, PRLV…VVCS, and VRLV…VICT. 3 cysteine pairs are disulfide-bonded: C73–C137, C86–C147, and C117–C127. 6 disulfide bridges follow: C180-C244, C193-C254, C224-C234, C287-C351, C300-C361, and C331-C341. Residues N334, N377, N441, N548, and N637 are each glycosylated (N-linked (GlcNAc...) asparagine). Cystine bridges form between C394–C458, C407–C468, C438–C448, C501–C565, C514–C575, C545–C555, C608–C672, C621–C682, C652–C662, C715–C779, C728–C789, C759–C769, C820–C884, C833–C894, C864–C874, C925–C989, C938–C999, and C969–C979. 4 N-linked (GlcNAc...) asparagine glycosylation sites follow: N972, N1013, N1084, and N1104. 3 consecutive SRCR domains span residues 1036-1136, 1141-1243, and 1246-1346; these read LRLV…VICS, LRLY…ITCE, and IRVR…VRCS. Cystine bridges form between C1061–C1125, C1074–C1135, and C1105–C1115. Residues N1161 and N1171 are each glycosylated (N-linked (GlcNAc...) asparagine). Intrachain disulfides connect C1181–C1242, C1212–C1222, C1271–C1335, C1284–C1345, and C1315–C1325. N-linked (GlcNAc...) asparagine glycans are attached at residues N1318 and N1354. A helical membrane pass occupies residues 1360–1380; the sequence is LALILSSIFGLLLLVLFILFL. Over 1381–1453 the chain is Cytoplasmic; the sequence is TWCRVQKQKH…GVLPASEATK (73 aa). The span at 1418–1435 shows a compositional bias: basic and acidic residues; it reads EDPHGTRTSDDTPNHGCE. Positions 1418–1453 are disordered; it reads EDPHGTRTSDDTPNHGCEDASDTSLLGVLPASEATK.

Isoform 1 is highly expressed in the spleen, lymph nodes, thymus, and fetal liver and weakly expressed in bone marrow and no expression was found in peripheral blood leukocytes. Isoform 1 expression is restricted to the monocyte and macrophage cell lines. Isoform 2 is only expressed in spleen.

It localises to the cell membrane. The protein localises to the secreted. The protein is Scavenger receptor cysteine-rich type 1 protein M160 (CD163L1) of Homo sapiens (Human).